A 351-amino-acid polypeptide reads, in one-letter code: Peptide chain release factor 1 (351 aa).

Gln230 bears the N5-methylglutamine mark.

It belongs to the prokaryotic/mitochondrial release factor family. In terms of processing, methylated by PrmC. Methylation increases the termination efficiency of RF1.

It localises to the cytoplasm. In terms of biological role, peptide chain release factor 1 directs the termination of translation in response to the peptide chain termination codons UAG and UAA. This chain is Peptide chain release factor 1, found in Onion yellows phytoplasma (strain OY-M).